Here is an 84-residue protein sequence, read N- to C-terminus: Small ribosomal subunit protein bS16 (84 aa).

It belongs to the bacterial ribosomal protein bS16 family.

In Paraburkholderia phytofirmans (strain DSM 17436 / LMG 22146 / PsJN) (Burkholderia phytofirmans), this protein is Small ribosomal subunit protein bS16.